The following is a 425-amino-acid chain: Paired box pox-neuro protein (425 aa).

Positions 5 to 132 form a DNA-binding region, paired; sequence GQAGVNQLGG…SSINRILRNS (128 aa). The tract at residues 8–64 is PAI subdomain; it reads GVNQLGGVFVNGRPLPDCVRRRIVDLALCGVRPCDISRQLLVSHGCVSKILTRFYET. The segment at 84-132 is RED subdomain; it reads TVVKKIIRLKEENSGMFAWEIREQLQQQRVCDPSSVPSISSINRILRNS. Disordered stretches follow at residues 159–188, 297–358, and 383–425; these read QAGSGPSNGYGGQAPPPPVTVAPPTPAATP, TKSE…RKRN, and LESS…EVVN. Pro residues predominate over residues 172–185; the sequence is APPPPVTVAPPTPA. 2 stretches are compositionally biased toward low complexity: residues 323-332 and 340-349; these read SSPAALSLTA and GSAPEASPGS. The segment covering 402-425 has biased composition (acidic residues); that stretch reads TPEDEDPAEAEEEQEEEDSVEVVN.

As to expression, central and peripheral nervous systems.

It localises to the nucleus. Transcriptional regulator that specifies poly-innervated organs (chemosensory bristle). Also controls the number of neurons. This Drosophila melanogaster (Fruit fly) protein is Paired box pox-neuro protein (Poxn).